Consider the following 135-residue polypeptide: Endoribonuclease YbeY (135 aa).

Positions 102, 106, and 112 each coordinate Zn(2+).

Belongs to the endoribonuclease YbeY family. Zn(2+) serves as cofactor.

Its subcellular location is the cytoplasm. Functionally, single strand-specific metallo-endoribonuclease involved in late-stage 70S ribosome quality control and in maturation of the 3' terminus of the 16S rRNA. The chain is Endoribonuclease YbeY from Rubrobacter xylanophilus (strain DSM 9941 / JCM 11954 / NBRC 16129 / PRD-1).